Consider the following 328-residue polypeptide: Protein FAM76B (328 aa).

The tract at residues 143–232 (KEQRKGLGSS…ITQSMDSGGT (90 aa)) is disordered. The span at 148-159 (GLGSSHSNSSSL) shows a compositional bias: low complexity. Residues 165 to 183 (QRHHHHHQHHRHGSSHHKI) are compositionally biased toward basic residues. A compositionally biased stretch (polar residues) spans 185–201 (GNLSPEQDQGLWKQSIQ). Phosphoserine is present on Ser188. A compositionally biased stretch (basic and acidic residues) spans 203–213 (ETPKKKPKLET). Residues 216–232 (SNGDSSSITQSMDSGGT) are compositionally biased toward polar residues. Positions 237–316 (LISQLKEEVM…KQVAALSKGK (80 aa)) form a coiled coil.

It belongs to the FAM76 family. As to expression, highly expressed in hematopoietic and immune systems including in the thymus, spleen, kidney, and blood vessel.

In terms of biological role, plays a role in hematopoiesis and immune system development, and participates in the inflammatory response. This chain is Protein FAM76B (fam76b), found in Danio rerio (Zebrafish).